A 286-amino-acid polypeptide reads, in one-letter code: Formyltetrahydrofolate deformylase (286 aa).

The 81-residue stretch at 8-88 (VLTLQCPEGI…MDWQLRERGQ (81 aa)) folds into the ACT domain. The active site involves D230.

This sequence belongs to the PurU family.

It carries out the reaction (6R)-10-formyltetrahydrofolate + H2O = (6S)-5,6,7,8-tetrahydrofolate + formate + H(+). The protein operates within purine metabolism; IMP biosynthesis via de novo pathway; formate from 10-formyl-5,6,7,8-tetrahydrofolate: step 1/1. Its function is as follows. Catalyzes the hydrolysis of 10-formyltetrahydrofolate (formyl-FH4) to formate and tetrahydrofolate (FH4). The polypeptide is Formyltetrahydrofolate deformylase (Corynebacterium sp. (strain P-1)).